Reading from the N-terminus, the 476-residue chain is Glycogen synthase (476 aa).

Residue K15 participates in ADP-alpha-D-glucose binding.

The protein belongs to the glycosyltransferase 1 family. Bacterial/plant glycogen synthase subfamily.

The catalysed reaction is [(1-&gt;4)-alpha-D-glucosyl](n) + ADP-alpha-D-glucose = [(1-&gt;4)-alpha-D-glucosyl](n+1) + ADP + H(+). It functions in the pathway glycan biosynthesis; glycogen biosynthesis. In terms of biological role, synthesizes alpha-1,4-glucan chains using ADP-glucose. This Yersinia pestis bv. Antiqua (strain Antiqua) protein is Glycogen synthase.